A 245-amino-acid chain; its full sequence is Chymotrypsin B (245 aa).

Intrachain disulfides connect C1/C121, C42/C58, C135/C201, C167/C182, and C191/C220. Residues 14-15 (AR) constitute a propeptide that is removed on maturation. Residues 16 to 243 (IVNGEEAVPH…LRGWVDQILA (228 aa)) form the Peptidase S1 domain. Residues H57 and D101 each act as charge relay system in the active site. S195 serves as the catalytic Charge relay system.

The protein belongs to the peptidase S1 family.

The protein resides in the secreted. Its subcellular location is the extracellular space. The enzyme catalyses Preferential cleavage: Tyr-|-Xaa, Trp-|-Xaa, Phe-|-Xaa, Leu-|-Xaa.. This chain is Chymotrypsin B, found in Gadus morhua (Atlantic cod).